A 379-amino-acid polypeptide reads, in one-letter code: Tryptophan 2,3-dioxygenase (379 aa).

Residues 57 to 61 (FIITH) and arginine 128 contribute to the substrate site. Heme is bound at residue histidine 312. Residue threonine 327 coordinates substrate.

Belongs to the tryptophan 2,3-dioxygenase family. Homotetramer. Dimer of dimers. Heme is required as a cofactor.

It catalyses the reaction L-tryptophan + O2 = N-formyl-L-kynurenine. The protein operates within amino-acid degradation; L-tryptophan degradation via kynurenine pathway; L-kynurenine from L-tryptophan: step 1/2. It functions in the pathway pigment biosynthesis; ommochrome biosynthesis. Heme-dependent dioxygenase that catalyzes the oxidative cleavage of the L-tryptophan (L-Trp) pyrrole ring and converts L-tryptophan to N-formyl-L-kynurenine. Catalyzes the oxidative cleavage of the indole moiety. This Drosophila erecta (Fruit fly) protein is Tryptophan 2,3-dioxygenase.